The chain runs to 430 residues: Cytochrome c biogenesis protein CcsB (430 aa).

Transmembrane regions (helical) follow at residues 14-34, 72-92, and 162-182; these read LRIAIGLLLVIALASALGTAI, SSWFLALLAWLGLALILCSWR, and AGPMLVHLGLVLLMLGAVWGS.

The protein belongs to the Ccs1/CcsB family. As to quaternary structure, may interact with CcsA.

It is found in the cellular thylakoid membrane. Functionally, required during biogenesis of c-type cytochromes (cytochrome c6 and cytochrome f) at the step of heme attachment. This is Cytochrome c biogenesis protein CcsB from Prochlorococcus marinus (strain MIT 9313).